The chain runs to 387 residues: MNLHEYQAKRLLAEEGVPVPRAIPAFSVREAVNQARELGGPAWVVKAQVHAGGRGKAGGVRMVDSIAQVEKAAQELLGKPLVTAQTGPQGQHVAALLIEEPSRIARELYLALMVDRGQARITFLATREGGVDIEELAASRPEALHRVVVEPSTGFLPFQARQLGFQFGLDAGQVQQLTRIMQGMYRLAQRLDALMVEINPLAITAEGRLLALDAKVVMDDNALYRHPESDELFDSTQQDGREITARQFGLNYISLEGNIGCMVNGAGLAMATMDLIKLHGGEPANFLDVGGGAAADKVNQAFKLILSDTRVKAILVNIFGGITRCDLLAEGIIQAAAEVGLHLPVVVRLEGTRKEEGMALLRESGLSLITADGLTDAAMKAVAAAQG.

Residues 9–244 (KRLLAEEGVP…STQQDGREIT (236 aa)) form the ATP-grasp domain. ATP contacts are provided by residues K46, 53–55 (GRG), E99, S102, and E107. 2 residues coordinate Mg(2+): N199 and D213. Residues N264 and 321-323 (GIT) each bind substrate.

It belongs to the succinate/malate CoA ligase beta subunit family. In terms of assembly, heterotetramer of two alpha and two beta subunits. It depends on Mg(2+) as a cofactor.

It carries out the reaction succinate + ATP + CoA = succinyl-CoA + ADP + phosphate. The catalysed reaction is GTP + succinate + CoA = succinyl-CoA + GDP + phosphate. Its pathway is carbohydrate metabolism; tricarboxylic acid cycle; succinate from succinyl-CoA (ligase route): step 1/1. Succinyl-CoA synthetase functions in the citric acid cycle (TCA), coupling the hydrolysis of succinyl-CoA to the synthesis of either ATP or GTP and thus represents the only step of substrate-level phosphorylation in the TCA. The beta subunit provides nucleotide specificity of the enzyme and binds the substrate succinate, while the binding sites for coenzyme A and phosphate are found in the alpha subunit. In Acidithiobacillus ferrooxidans (strain ATCC 23270 / DSM 14882 / CIP 104768 / NCIMB 8455) (Ferrobacillus ferrooxidans (strain ATCC 23270)), this protein is Succinate--CoA ligase [ADP-forming] subunit beta.